The sequence spans 86 residues: Small nuclear ribonucleoprotein F (86 aa).

Residues 14–86 (NPKPFLKGLV…NVLYIRELPN (73 aa)) enclose the Sm domain.

The protein belongs to the snRNP Sm proteins family. SmF/LSm6 subfamily. Component of the Sm core complex, present in spliceosomal snRNP U1, U2, U4/U6 and U5. The core complex contains SMB1, SMD1, SMD2, SMD3, SME1, SMX3 and SMX2 (Sm proteins B, D1, D2, D3, E, F and G, respectively), and is probably a heptameric ring structure. SMX3 specifically interacts with SME1. Belongs to the CWC complex (or CEF1-associated complex), a spliceosome sub-complex reminiscent of a late-stage spliceosome composed of the U2, U5 and U6 snRNAs and at least BUD13, BUD31, BRR2, CDC40, CEF1, CLF1, CUS1, CWC2, CWC15, CWC21, CWC22, CWC23, CWC24, CWC25, CWC27, ECM2, HSH155, IST3, ISY1, LEA1, MSL1, NTC20, PRP8, PRP9, PRP11, PRP19, PRP21, PRP22, PRP45, PRP46, SLU7, SMB1, SMD1, SMD2, SMD3, SMX2, SMX3, SNT309, SNU114, SPP2, SYF1, SYF2, RSE1 and YJU2. Component of the U4/U6-U5 tri-snRNP complex composed of the U4, U6 and U5 snRNAs and at least PRP3, PRP4, PRP6, PRP8, PRP18, PRP31, PRP38, SNU13, SNU23, SNU66, SNU114, SPP381, SMB1, SMD1, SMD2, SMD3, SMX2, SMX3, LSM2, LSM3, LSM4, LSM5, LSM6, LSM7, LSM8, BRR2 and DIB1.

The protein resides in the nucleus. Its subcellular location is the cytoplasm. Plays a role in pre-mRNA splicing as a core component of the spliceosomal U1, U2, U4 and U5 small nuclear ribonucleoproteins (snRNPs), the building blocks of the spliceosome. This is Small nuclear ribonucleoprotein F (SMX3) from Saccharomyces cerevisiae (strain ATCC 204508 / S288c) (Baker's yeast).